Here is a 172-residue protein sequence, read N- to C-terminus: MDFSSKIRLIKDFPKPGINFRDITTLLQDAKAFKQAVDAMVGLCKDFDVDVIACPEARGFVLGAPMAYAMGKGLVLLRKPGKLPGKAVSHSYQLEYGMDSLEVHEGAILPGHKVLLVDDVLATGGTVAAGVELIKKTGGEVVGIAFLIELLGLNARDKLGNYPVVTLLQLDA.

This sequence belongs to the purine/pyrimidine phosphoribosyltransferase family. In terms of assembly, homodimer.

It is found in the cytoplasm. The catalysed reaction is AMP + diphosphate = 5-phospho-alpha-D-ribose 1-diphosphate + adenine. It participates in purine metabolism; AMP biosynthesis via salvage pathway; AMP from adenine: step 1/1. Catalyzes a salvage reaction resulting in the formation of AMP, that is energically less costly than de novo synthesis. The sequence is that of Adenine phosphoribosyltransferase from Desulforamulus reducens (strain ATCC BAA-1160 / DSM 100696 / MI-1) (Desulfotomaculum reducens).